Consider the following 119-residue polypeptide: Ribonuclease P protein component (119 aa).

The protein belongs to the RnpA family. As to quaternary structure, consists of a catalytic RNA component (M1 or rnpB) and a protein subunit.

It carries out the reaction Endonucleolytic cleavage of RNA, removing 5'-extranucleotides from tRNA precursor.. Functionally, RNaseP catalyzes the removal of the 5'-leader sequence from pre-tRNA to produce the mature 5'-terminus. It can also cleave other RNA substrates such as 4.5S RNA. The protein component plays an auxiliary but essential role in vivo by binding to the 5'-leader sequence and broadening the substrate specificity of the ribozyme. The protein is Ribonuclease P protein component of Proteus mirabilis (strain HI4320).